The following is a 468-amino-acid chain: TFIIA-alpha and beta-like factor (468 aa).

Disordered stretches follow at residues 215 to 236 and 379 to 416; these read DRRL…LSLP and DSVS…SEQD. Residues 380–391 are compositionally biased toward polar residues; it reads SVSNEDSTANSS. Acidic residues predominate over residues 401 to 416; the sequence is PEEDPLNSGDDVSEQD.

It belongs to the TFIIA subunit 1 family. In terms of tissue distribution, testis specific. Expressed in pachytene spermatocytes and haploid spermatids.

The protein localises to the nucleus. Functionally, may function as a testis specific transcription factor. Binds DNA in conjunction with GTF2A2 and TBP (the TATA-binding protein) and together with GTF2A2, allows mRNA transcription. The polypeptide is TFIIA-alpha and beta-like factor (Gtf2a1l) (Mus musculus (Mouse)).